The primary structure comprises 59 residues: Large ribosomal subunit protein uL30 (59 aa).

Belongs to the universal ribosomal protein uL30 family. In terms of assembly, part of the 50S ribosomal subunit.

The protein is Large ribosomal subunit protein uL30 of Staphylococcus haemolyticus (strain JCSC1435).